Consider the following 1172-residue polypeptide: Protein diaphanous homolog 3 (1172 aa).

Residues Met1 to Ala15 are compositionally biased toward basic and acidic residues. A disordered region spans residues Met1 to Arg36. The Nuclear localization signal signature appears at Ser16–Leu39. Thr47 is subject to Phosphothreonine. Ser56 is subject to Phosphoserine. The tract at residues Ile57–Ser96 is disordered. Residues Ser77–Ser87 show a composition bias toward low complexity. Residues Pro94–Asp456 form the GBD/FH3 domain. Position 155 is a phosphoserine (Ser155). Residues Cys493–Gln530 are a coiled coil. The interval Pro535 to Pro586 is disordered. The region spanning Pro541–Pro611 is the FH1 domain. The segment covering Ser553–Pro581 has biased composition (pro residues). Positions Pro616 to Arg1014 constitute an FH2 domain. The DAD domain occupies Asp1037 to Asp1067. Phosphoserine occurs at positions 1073 and 1158. A Nuclear export signal motif is present at residues Glu1163 to Leu1172.

The protein belongs to the formin homology family. Diaphanous subfamily. Post-translationally, ubiquitinated. As to expression, expressed in testis. Present in Sertoli cells (at protein level).

Its subcellular location is the cytoplasm. It is found in the nucleus. Functionally, actin nucleation and elongation factor required for the assembly of F-actin structures, such as actin cables and stress fibers. Required for cytokinesis, stress fiber formation and transcriptional activation of the serum response factor. Binds to GTP-bound form of Rho and to profilin: acts in a Rho-dependent manner to recruit profilin to the membrane, where it promotes actin polymerization. DFR proteins couple Rho and Src tyrosine kinase during signaling and the regulation of actin dynamics. Also acts as an actin nucleation and elongation factor in the nucleus by promoting nuclear actin polymerization inside the nucleus to drive serum-dependent SRF-MRTFA activity. The protein is Protein diaphanous homolog 3 of Rattus norvegicus (Rat).